A 461-amino-acid chain; its full sequence is Metacaspase-1 (461 aa).

4 stretches are compositionally biased toward gly residues: residues Met1 to Gly21, Gln45 to Pro66, Gln74 to Pro86, and Pro105 to Gly119. The tract at residues Met1–Thr154 is disordered. Composition is skewed to low complexity over residues Gly121 to Gln131 and His138 to Asn148. Active-site residues include His252 and Cys308.

This sequence belongs to the peptidase C14B family.

Its function is as follows. Involved in cell death (apoptosis). The sequence is that of Metacaspase-1 (MCA1) from Yarrowia lipolytica (strain CLIB 122 / E 150) (Yeast).